Here is a 277-residue protein sequence, read N- to C-terminus: Digeranylgeranylglyceryl phosphate synthase (277 aa).

7 helical membrane-spanning segments follow: residues 16–36, 84–104, 107–127, 146–166, 200–220, 221–241, and 257–277; these read ILAGIVGILGALVAYEGIPDI, ALYYALLQYAIGSILAYFLNI, FVFATIAYFLTFLYGWKLKPL, GAIGVGRIGLAGYLAICAFLV, AIIAAIFGFLTVIASFLPVKV, GIGLGYAPIIIVDIIIIKASI, and LKIATFVAVISFLAGALTKGV.

This sequence belongs to the UbiA prenyltransferase family. DGGGP synthase subfamily. Mg(2+) is required as a cofactor.

It is found in the cell membrane. The enzyme catalyses sn-3-O-(geranylgeranyl)glycerol 1-phosphate + (2E,6E,10E)-geranylgeranyl diphosphate = 2,3-bis-O-(geranylgeranyl)-sn-glycerol 1-phosphate + diphosphate. Its pathway is membrane lipid metabolism; glycerophospholipid metabolism. Functionally, prenyltransferase that catalyzes the transfer of the geranylgeranyl moiety of geranylgeranyl diphosphate (GGPP) to the C2 hydroxyl of (S)-3-O-geranylgeranylglyceryl phosphate (GGGP). This reaction is the second ether-bond-formation step in the biosynthesis of archaeal membrane lipids. This chain is Digeranylgeranylglyceryl phosphate synthase, found in Pyrococcus furiosus (strain ATCC 43587 / DSM 3638 / JCM 8422 / Vc1).